The chain runs to 506 residues: Maturase K (506 aa).

Belongs to the intron maturase 2 family. MatK subfamily.

The protein resides in the plastid. It is found in the chloroplast. Its function is as follows. Usually encoded in the trnK tRNA gene intron. Probably assists in splicing its own and other chloroplast group II introns. The protein is Maturase K of Pisum sativum (Garden pea).